Consider the following 510-residue polypeptide: Flavonoid 3',5'-hydroxylase (510 aa).

Cysteine 447 provides a ligand contact to heme.

This sequence belongs to the cytochrome P450 family. Heme is required as a cofactor.

It carries out the reaction a 3',5'-unsubstituted flavanone + 2 reduced [NADPH--hemoprotein reductase] + 2 O2 = a 3',5'-dihydroxyflavanone + 2 oxidized [NADPH--hemoprotein reductase] + 2 H2O + 2 H(+). Its pathway is pigment biosynthesis; anthocyanin biosynthesis. Catalyzes the 3'5'-hydroxylation of naringenin and eriodictyol to form 5,7,3,'4',5'-pentahydroxyflavanone and 3',5'-hydroxylation of dihydrokaempferol and dihydroquercetin to form dihydromyricetin. The polypeptide is Flavonoid 3',5'-hydroxylase (CYP75A5) (Eustoma exaltatum subsp. russellianum (Bluebells)).